The following is a 109-amino-acid chain: Iron-sulfur cluster assembly protein CyaY (109 aa).

The protein belongs to the frataxin family.

Its function is as follows. Involved in iron-sulfur (Fe-S) cluster assembly. May act as a regulator of Fe-S biogenesis. This chain is Iron-sulfur cluster assembly protein CyaY, found in Burkholderia lata (strain ATCC 17760 / DSM 23089 / LMG 22485 / NCIMB 9086 / R18194 / 383).